The primary structure comprises 200 residues: Large ribosomal subunit protein uL4 (200 aa).

A disordered region spans residues 42–65; sequence TRAQKTRSEVSGGGAKPWRQKGTG.

It belongs to the universal ribosomal protein uL4 family. Part of the 50S ribosomal subunit.

In terms of biological role, one of the primary rRNA binding proteins, this protein initially binds near the 5'-end of the 23S rRNA. It is important during the early stages of 50S assembly. It makes multiple contacts with different domains of the 23S rRNA in the assembled 50S subunit and ribosome. Forms part of the polypeptide exit tunnel. This is Large ribosomal subunit protein uL4 from Aliivibrio fischeri (strain MJ11) (Vibrio fischeri).